The chain runs to 733 residues: tRNA (guanine(27)-N(2))-dimethyltransferase (733 aa).

Over residues 1-18 (MENMAEEELLPLEKEEVE) the composition is skewed to acidic residues. The disordered stretch occupies residues 1 to 78 (MENMAEEELL…LASAPEEAKS (78 aa)). The residue at position 26 (threonine 26) is a Phosphothreonine. 2 stretches are compositionally biased toward low complexity: residues 39 to 49 (PDSALDSAPTP) and 57 to 73 (PALA…ASAP). Serine 66 is modified (phosphoserine). Residues 135 to 139 (HKLRR) carry the Nucleolar localization signal motif. The C2H2-type zinc finger occupies 184 to 206 (YHCIICSATITRRTDMLGHVRRH). Residues 227-688 (EILKEADTDV…APLMQFKSIL (462 aa)) enclose the Trm1 methyltransferase domain. Residues arginine 260, aspartate 307, aspartate 357, and alanine 358 each coordinate S-adenosyl-L-methionine. 4 residues coordinate Zn(2+): cysteine 488, cysteine 491, cysteine 513, and cysteine 515. Lysine 585 participates in a covalent cross-link: Glycyl lysine isopeptide (Lys-Gly) (interchain with G-Cter in SUMO2). Serine 612 and serine 707 each carry phosphoserine.

The protein belongs to the class I-like SAM-binding methyltransferase superfamily. Trm1 family. Widely expressed.

It is found in the nucleus. Its subcellular location is the nucleolus. It carries out the reaction guanosine(27) in tRNA(Tyr) + 2 S-adenosyl-L-methionine = N(2)-dimethylguanosine(27) in tRNA(Tyr) + 2 S-adenosyl-L-homocysteine + 2 H(+). In terms of biological role, specifically dimethylates a single guanine residue at position 27 of tRNA(Tyr) using S-adenosyl-L-methionine as donor of the methyl groups. Dimethylation at position 27 of tRNA(Tyr) is required for efficient translation of tyrosine codons. Also required to maintain 3-(3-amino-3-carboxypropyl)uridine (acp3U) in the D-loop of several cytoplasmic tRNAs. In Homo sapiens (Human), this protein is tRNA (guanine(27)-N(2))-dimethyltransferase.